Consider the following 141-residue polypeptide: Lutropin subunit beta (141 aa).

A signal peptide spans 1–20 (MEMLQGLLLWLLLNVGGVWA). Intrachain disulfides connect cysteine 29-cysteine 77, cysteine 43-cysteine 92, cysteine 46-cysteine 130, cysteine 54-cysteine 108, cysteine 58-cysteine 110, and cysteine 113-cysteine 120. Residue asparagine 33 is glycosylated (N-linked (GlcNAc...) asparagine).

Belongs to the glycoprotein hormones subunit beta family. As to quaternary structure, heterodimer of a common alpha chain and a unique beta chain which confers biological specificity to thyrotropin, lutropin, follitropin and gonadotropin.

It localises to the secreted. Its function is as follows. Promotes spermatogenesis and ovulation by stimulating the testes and ovaries to synthesize steroids. The polypeptide is Lutropin subunit beta (LHB) (Ailurus fulgens (Himalayan red panda)).